The chain runs to 1905 residues: Alpha-2-macroglobulin (1905 aa).

The first 21 residues, 1–21, serve as a signal peptide directing secretion; sequence MNKQYFLSLFSTLAVALTLSG. The N-palmitoyl cysteine moiety is linked to residue C22. A lipid anchor (S-diacylglycerol cysteine) is attached at C22. The isoglutamyl cysteine thioester (Cys-Gln) cross-link spans 1438-1441; it reads CTEQ.

The protein belongs to the protease inhibitor I39 (alpha-2-macroglobulin) family. Bacterial alpha-2-macroglobulin subfamily.

It localises to the cell membrane. Its function is as follows. Protects the bacterial cell from host peptidases. The polypeptide is Alpha-2-macroglobulin (Pasteurella multocida (strain Pm70)).